We begin with the raw amino-acid sequence, 205 residues long: Holliday junction branch migration complex subunit RuvA (205 aa).

A domain I region spans residues Met-1 to Arg-64. Positions Thr-65–Val-143 are domain II. A flexible linker region spans residues Gln-144–Ala-154. The tract at residues Ala-154–Lys-205 is domain III.

This sequence belongs to the RuvA family. As to quaternary structure, homotetramer. Forms an RuvA(8)-RuvB(12)-Holliday junction (HJ) complex. HJ DNA is sandwiched between 2 RuvA tetramers; dsDNA enters through RuvA and exits via RuvB. An RuvB hexamer assembles on each DNA strand where it exits the tetramer. Each RuvB hexamer is contacted by two RuvA subunits (via domain III) on 2 adjacent RuvB subunits; this complex drives branch migration. In the full resolvosome a probable DNA-RuvA(4)-RuvB(12)-RuvC(2) complex forms which resolves the HJ.

The protein resides in the cytoplasm. Functionally, the RuvA-RuvB-RuvC complex processes Holliday junction (HJ) DNA during genetic recombination and DNA repair, while the RuvA-RuvB complex plays an important role in the rescue of blocked DNA replication forks via replication fork reversal (RFR). RuvA specifically binds to HJ cruciform DNA, conferring on it an open structure. The RuvB hexamer acts as an ATP-dependent pump, pulling dsDNA into and through the RuvAB complex. HJ branch migration allows RuvC to scan DNA until it finds its consensus sequence, where it cleaves and resolves the cruciform DNA. In Rhodopseudomonas palustris (strain BisB5), this protein is Holliday junction branch migration complex subunit RuvA.